The primary structure comprises 71 residues: Small ribosomal subunit protein bS21 (71 aa).

Residues 48–71 form a disordered region; sequence ENATLAKRHAKRNARENARNTRLY. A compositionally biased stretch (basic and acidic residues) spans 60–71; that stretch reads NARENARNTRLY.

Belongs to the bacterial ribosomal protein bS21 family.

This chain is Small ribosomal subunit protein bS21, found in Haemophilus influenzae (strain 86-028NP).